Here is a 147-residue protein sequence, read N- to C-terminus: Sec-independent protein translocase protein TatB (147 aa).

Residues 2-22 (FSSIGWPEIFTVLILGLIIIG) form a helical membrane-spanning segment. The disordered stretch occupies residues 96 to 147 (FDPKKIMASGTEGEAYRERGINPQPAGDSASPQTPSNKESQPKAGFSWDDIT). Positions 125-134 (ASPQTPSNKE) are enriched in polar residues.

It belongs to the TatB family. The Tat system comprises two distinct complexes: a TatABC complex, containing multiple copies of TatA, TatB and TatC subunits, and a separate TatA complex, containing only TatA subunits. Substrates initially bind to the TatABC complex, which probably triggers association of the separate TatA complex to form the active translocon.

The protein resides in the cell membrane. Functionally, part of the twin-arginine translocation (Tat) system that transports large folded proteins containing a characteristic twin-arginine motif in their signal peptide across membranes. Together with TatC, TatB is part of a receptor directly interacting with Tat signal peptides. TatB may form an oligomeric binding site that transiently accommodates folded Tat precursor proteins before their translocation. This Corynebacterium diphtheriae (strain ATCC 700971 / NCTC 13129 / Biotype gravis) protein is Sec-independent protein translocase protein TatB.